The sequence spans 201 residues: Imidazoleglycerol-phosphate dehydratase (201 aa).

This sequence belongs to the imidazoleglycerol-phosphate dehydratase family.

The protein localises to the cytoplasm. The catalysed reaction is D-erythro-1-(imidazol-4-yl)glycerol 3-phosphate = 3-(imidazol-4-yl)-2-oxopropyl phosphate + H2O. It participates in amino-acid biosynthesis; L-histidine biosynthesis; L-histidine from 5-phospho-alpha-D-ribose 1-diphosphate: step 6/9. The sequence is that of Imidazoleglycerol-phosphate dehydratase from Synechococcus sp. (strain CC9902).